The chain runs to 879 residues: Fanconi anemia core complex-associated protein 100 (879 aa).

In terms of assembly, belongs to the multisubunit FA complex composed of FANCA, FANCB, FANCC, FANCE, FANCF, FANCG, FANCL/PHF9, FANCM, FAAP24 and FAAP100. Forms a subcomplex with FANCB and FANCL.

The protein resides in the nucleus. Its function is as follows. Plays a role in Fanconi anemia-associated DNA damage response network. Regulates FANCD2 monoubiquitination and the stability of the FA core complex. Induces chromosomal instability as well as hypersensitivity to DNA cross-linking agents, when repressed. The sequence is that of Fanconi anemia core complex-associated protein 100 from Mus musculus (Mouse).